We begin with the raw amino-acid sequence, 204 residues long: uncharacterized protein (204 aa).

A helical membrane pass occupies residues 160–180; sequence GLTVAAIASVVVAGAVTYLVV.

It to M.pneumoniae MPN_373 C-terminal region.

It localises to the cell membrane. This is an uncharacterized protein from Mycoplasma pneumoniae (strain ATCC 29342 / M129 / Subtype 1) (Mycoplasmoides pneumoniae).